The chain runs to 454 residues: GTPase Der (454 aa).

2 EngA-type G domains span residues 3–167 (PVIT…GIAE) and 181–354 (MKIA…AAAM). GTP contacts are provided by residues 9–16 (GRPNVGKS), 56–60 (DTGGF), 119–122 (NKTE), 187–194 (GRPNVGKS), 234–238 (DTAGL), and 299–302 (NKWD). In terms of domain architecture, KH-like spans 355 to 439 (AKLPTPRLTR…PLRIQMNTAK (85 aa)).

It belongs to the TRAFAC class TrmE-Era-EngA-EngB-Septin-like GTPase superfamily. EngA (Der) GTPase family. As to quaternary structure, associates with the 50S ribosomal subunit.

Functionally, GTPase that plays an essential role in the late steps of ribosome biogenesis. The protein is GTPase Der of Polynucleobacter asymbioticus (strain DSM 18221 / CIP 109841 / QLW-P1DMWA-1) (Polynucleobacter necessarius subsp. asymbioticus).